A 366-amino-acid chain; its full sequence is Chorismate synthase (366 aa).

NADP(+) contacts are provided by R48 and R54. Residues 125–127 (RSS), 238–239 (NA), G278, 293–297 (KPTSS), and R319 each bind FMN.

It belongs to the chorismate synthase family. In terms of assembly, homotetramer. It depends on FMNH2 as a cofactor.

It catalyses the reaction 5-O-(1-carboxyvinyl)-3-phosphoshikimate = chorismate + phosphate. It participates in metabolic intermediate biosynthesis; chorismate biosynthesis; chorismate from D-erythrose 4-phosphate and phosphoenolpyruvate: step 7/7. Catalyzes the anti-1,4-elimination of the C-3 phosphate and the C-6 proR hydrogen from 5-enolpyruvylshikimate-3-phosphate (EPSP) to yield chorismate, which is the branch point compound that serves as the starting substrate for the three terminal pathways of aromatic amino acid biosynthesis. This reaction introduces a second double bond into the aromatic ring system. The polypeptide is Chorismate synthase (Thiobacillus denitrificans (strain ATCC 25259 / T1)).